A 553-amino-acid chain; its full sequence is ATP synthase subunit alpha (553 aa).

173-180 (GDRQTGKT) contributes to the ATP binding site. The interval 527–553 (EALDPSAVEREEIAVHHRKPSDETAGH) is disordered. The segment covering 533–553 (AVEREEIAVHHRKPSDETAGH) has biased composition (basic and acidic residues).

The protein belongs to the ATPase alpha/beta chains family. In terms of assembly, F-type ATPases have 2 components, CF(1) - the catalytic core - and CF(0) - the membrane proton channel. CF(1) has five subunits: alpha(3), beta(3), gamma(1), delta(1), epsilon(1). CF(0) has three main subunits: a(1), b(2) and c(9-12). The alpha and beta chains form an alternating ring which encloses part of the gamma chain. CF(1) is attached to CF(0) by a central stalk formed by the gamma and epsilon chains, while a peripheral stalk is formed by the delta and b chains.

The protein localises to the cell membrane. The enzyme catalyses ATP + H2O + 4 H(+)(in) = ADP + phosphate + 5 H(+)(out). Functionally, produces ATP from ADP in the presence of a proton gradient across the membrane. The alpha chain is a regulatory subunit. This chain is ATP synthase subunit alpha, found in Parafrankia sp. (strain EAN1pec).